Reading from the N-terminus, the 182-residue chain is Small ribosomal subunit protein uS4c (182 aa).

The disordered stretch occupies residues Gly-13 to Arg-34. One can recognise an S4 RNA-binding domain in the interval Met-82–Asn-143.

This sequence belongs to the universal ribosomal protein uS4 family. As to quaternary structure, part of the 30S ribosomal subunit. Contacts protein S5. The interaction surface between S4 and S5 is involved in control of translational fidelity.

Its subcellular location is the plastid. The protein resides in the chloroplast. In terms of biological role, one of the primary rRNA binding proteins, it binds directly to 16S rRNA where it nucleates assembly of the body of the 30S subunit. Its function is as follows. With S5 and S12 plays an important role in translational accuracy. This chain is Small ribosomal subunit protein uS4c (rps4), found in Iris lutescens (Crimean iris).